We begin with the raw amino-acid sequence, 308 residues long: Aspartate carbamoyltransferase catalytic subunit (308 aa).

Carbamoyl phosphate contacts are provided by arginine 59 and threonine 60. Lysine 87 contacts L-aspartate. Arginine 109, histidine 137, and glutamine 140 together coordinate carbamoyl phosphate. L-aspartate-binding residues include arginine 170 and arginine 224. Carbamoyl phosphate-binding residues include glycine 265 and proline 266.

The protein belongs to the aspartate/ornithine carbamoyltransferase superfamily. ATCase family. In terms of assembly, heterododecamer (2C3:3R2) of six catalytic PyrB chains organized as two trimers (C3), and six regulatory PyrI chains organized as three dimers (R2).

It catalyses the reaction carbamoyl phosphate + L-aspartate = N-carbamoyl-L-aspartate + phosphate + H(+). It functions in the pathway pyrimidine metabolism; UMP biosynthesis via de novo pathway; (S)-dihydroorotate from bicarbonate: step 2/3. In terms of biological role, catalyzes the condensation of carbamoyl phosphate and aspartate to form carbamoyl aspartate and inorganic phosphate, the committed step in the de novo pyrimidine nucleotide biosynthesis pathway. The chain is Aspartate carbamoyltransferase catalytic subunit from Flavobacterium johnsoniae (strain ATCC 17061 / DSM 2064 / JCM 8514 / BCRC 14874 / CCUG 350202 / NBRC 14942 / NCIMB 11054 / UW101) (Cytophaga johnsonae).